Consider the following 157-residue polypeptide: MSTVVETVTALAQPIVAQHQFELVDVEFVKEGKSWYLRLYIDKPGGINIEECALVSDEVSEKMDALDPDPIPQAYFLEVSSPGAERPLKKPADFEKAVGDYIHVSLYQKIGNSKVYEGTLLSLTADSLDLEVNLKGRIKTLTIPRDAVAQARLAIKF.

It belongs to the RimP family.

The protein localises to the cytoplasm. Functionally, required for maturation of 30S ribosomal subunits. The chain is Ribosome maturation factor RimP from Levilactobacillus brevis (strain ATCC 367 / BCRC 12310 / CIP 105137 / JCM 1170 / LMG 11437 / NCIMB 947 / NCTC 947) (Lactobacillus brevis).